We begin with the raw amino-acid sequence, 156 residues long: Cyanate hydratase (156 aa).

Active-site residues include Arg-96, Glu-99, and Ser-122.

The protein belongs to the cyanase family.

The catalysed reaction is cyanate + hydrogencarbonate + 3 H(+) = NH4(+) + 2 CO2. Catalyzes the reaction of cyanate with bicarbonate to produce ammonia and carbon dioxide. The sequence is that of Cyanate hydratase from Pseudomonas entomophila (strain L48).